The chain runs to 231 residues: Lytic polysaccharide monooxygenase-like protein X325 (231 aa).

Positions 1–17 (MRLSLLVTLALTALIEA) are cleaved as a signal peptide. His18 serves as a coordination point for Cu(2+). Asn34, Asn55, Asn98, Asn133, Asn174, and Asn180 each carry an N-linked (GlcNAc...) asparagine glycan. Cystine bridges form between Cys47-Cys157 and Cys122-Cys178. The GPI-anchor amidated isoleucine moiety is linked to residue Ile202. The propeptide at 203–231 (ASTTTGSAPRYYSWAGWLPLVAGAIWMAL) is removed in mature form.

The protein belongs to the X325 family. It depends on Cu(2+) as a cofactor.

The protein resides in the cell membrane. Its function is as follows. Lytic polysaccharide monooxygenase-like protein that has diverged to biological functions other than polysaccharide degradation since it does not perform oxidative cleavage of polysaccharides. Acts as a cell surface-bound protein that functions in the copper-accumulation pathway. May also act as the major cell wall sensor that regulates MAP kinase-dependent hyphal anastomosis, the fusion of hyphal cells. The polypeptide is Lytic polysaccharide monooxygenase-like protein X325 (Hypocrea jecorina (strain QM6a) (Trichoderma reesei)).